A 178-amino-acid polypeptide reads, in one-letter code: Major non-capsid protein (178 aa).

The protein belongs to the tenuiviruses NCP family.

The protein localises to the host cytoplasm. Induces the formation of large intracellular inclusion body, organized in amorphous and crystalline arrays. Presumably the main cause of the stripe disease observed in host. This Rice stripe virus (isolate T) (RSV) protein is Major non-capsid protein.